Reading from the N-terminus, the 473-residue chain is MTRGRVIQVMGPVVDVKFENGHLPAIYNALKIQHQARNENEVDIDLTLEVALHLGDDTVRTIAMASTDGLIRGMEVVDTGAPISVPVGDVTLGRVFNVLGEPIDLQDDIPAEARRDPIHRPAPKFEELATEVEILETGIKVVDLLAPYIKGGKIGLFGGAGVGKTVLIQELIHNIAQEHGGISVFAGVGERTREGNDLYHEMKDSGVISKTAMVFGQMNEPPGARMRVALTGLTMAEYFRDEQGQDVLLFIDNIFRFTQAGSEVSALLGRMPSAVGYQPTLATEMGQLQERITSTSKGSITSIQAIYVPADDYTDPAPATTFSHLDATTNLERKLAEMGIYPAVDPLASTSRALAPEIVGEEHYQVARRVQQTLQRYKELQDIIAILGMDELSDEDKLVVHRARRIQFFLSQNFHVAEQFTGQPGSYVPVKETVRGFKEILDGKYDHLPEDAFRLVGRIEEVVEKAKAMGVEV.

Residue 158 to 165 (GGAGVGKT) participates in ATP binding.

This sequence belongs to the ATPase alpha/beta chains family. As to quaternary structure, F-type ATPases have 2 components, CF(1) - the catalytic core - and CF(0) - the membrane proton channel. CF(1) has five subunits: alpha(3), beta(3), gamma(1), delta(1), epsilon(1). CF(0) has three main subunits: a(1), b(2) and c(9-12). The alpha and beta chains form an alternating ring which encloses part of the gamma chain. CF(1) is attached to CF(0) by a central stalk formed by the gamma and epsilon chains, while a peripheral stalk is formed by the delta and b chains.

It is found in the cell membrane. The enzyme catalyses ATP + H2O + 4 H(+)(in) = ADP + phosphate + 5 H(+)(out). In terms of biological role, produces ATP from ADP in the presence of a proton gradient across the membrane. The catalytic sites are hosted primarily by the beta subunits. The polypeptide is ATP synthase subunit beta (Geobacillus thermodenitrificans (strain NG80-2)).